The primary structure comprises 266 residues: 15-hydroxyprostaglandin dehydrogenase [NAD(+)] (266 aa).

NAD(+) contacts are provided by residues 12-20 (GAAQGIGKA), 36-37 (DW), 63-65 (CDV), and Asn91. Positions 138 and 148 each coordinate substrate. The active-site Proton acceptor is the Tyr151. NAD(+) is bound by residues 151-155 (YCASK) and 186-188 (VKT).

It belongs to the short-chain dehydrogenases/reductases (SDR) family. In terms of assembly, homodimer.

The protein resides in the cytoplasm. The catalysed reaction is prostaglandin E2 + NAD(+) = 15-oxoprostaglandin E2 + NADH + H(+). It carries out the reaction (15S)-hydroxy-(5Z,8Z,11Z,13E)-eicosatetraenoate + NAD(+) = 15-oxo-(5Z,8Z,11Z,13E)-eicosatetraenoate + NADH + H(+). The enzyme catalyses (11R)-hydroxy-(5Z,8Z,12E,14Z)-eicosatetraenoate + NAD(+) = 11-oxo-(5Z,8Z,12E,14Z)-eicosatetraenoate + NADH + H(+). It catalyses the reaction lipoxin A4 + NAD(+) = 15-oxo-(5S,6R)-dihydroxy-(7E,9E,11Z,13E)-eicosatetraenoate + NADH + H(+). The catalysed reaction is 15-oxo-(5S,6R)-dihydroxy-(7E,9E,11Z)-eicosatrienoate + NADH + H(+) = (5S,6R,15S)-trihydroxy-(7E,9E,11Z)-eicosatrienoate + NAD(+). It carries out the reaction prostaglandin A1 + NAD(+) = 15-oxo-prostaglandin A1 + NADH + H(+). The enzyme catalyses prostaglandin E1 + NAD(+) = 15-oxoprostaglandin E1 + NADH + H(+). It catalyses the reaction 14-hydroxy-(4Z,7Z,10Z,12E,16Z,19Z)-docosahexaenoate + NAD(+) = 14-oxo-(4Z,7Z,10Z,12E,16Z,19Z)-docosahexaenoate + NADH + H(+). The catalysed reaction is resolvin E1 + NAD(+) = 18-oxo-resolvin E1 + NADH + H(+). It carries out the reaction resolvin D1 + NAD(+) = 8-oxoresolvin D1 + NADH + H(+). The enzyme catalyses resolvin D1 + NAD(+) = 17-oxoresolvin D1 + NADH + H(+). It catalyses the reaction resolvin D2 + NAD(+) = 7-oxoresolvin D2 + NADH + H(+). The catalysed reaction is resolvin D2 + NAD(+) = 16-oxoresolvin D2 + NADH + H(+). In terms of biological role, catalyzes the NAD-dependent dehydrogenation (oxidation) of a broad array of hydroxylated polyunsaturated fatty acids (mainly eicosanoids and docosanoids, including prostaglandins, lipoxins and resolvins), yielding their corresponding keto (oxo) metabolites. Decreases the levels of the pro-proliferative prostaglandins such as prostaglandin E2 (whose activity is increased in cancer because of an increase in the expression of cyclooxygenase 2) and generates oxo-fatty acid products that can profoundly influence cell function by abrogating pro-inflammatory cytokine expression. Converts resolvins E1, D1 and D2 to their oxo products, which represents a mode of resolvin inactivation. Resolvin E1 plays important roles during the resolution phase of acute inflammation, while resolvins D1 and D2 have a unique role in obesity-induced adipose inflammation. The chain is 15-hydroxyprostaglandin dehydrogenase [NAD(+)] (Hpgd) from Rattus norvegicus (Rat).